Reading from the N-terminus, the 1663-residue chain is MKNIFKDKNIYILSVENDQRDKCKSYLISKKALVEKRFSKKVNIIITSEKTILENKFPVNTATKLGIEIIDYETLSRDIERFIRKTQPTSSNGSTSTTTTTTTTTQKGQIVSFKPTSSTSTTTNVINTTTTSTTSTTTIVDPIISLIVPPSGSNNGSFQIAIFGIGFLAGAGFRIKIGNDNGGGGVFASNYEFHSSTSVLCTIPNLNIKCGQQPIYASNDGGKTFGFPIQFLFFDTSIHRIPTAREQDGMVLKSQLDNLKRAISNIQTMESILMRRISLLNGNHDDSKSIEQIFIQQQNFIESGASQLLLGNGGTTDQLLQSLEGSEYSSTNDDGENDQSDDDDDNEDDDDFVEKNSNQVKEEFSEREIKIFISSPFKDMQLDRDQIVKVVIPRIRKLCIERDIVLSYVDLRWGVTSNQSEQSTGLSMCLKELEKCNILIGLFGERYGWSSQEKQDPKSQQLLQSTLDRAIQDFPWVKNYRDSSITEIEFRMLLNQRQQQRNGFFYFRDPYYLEEVSQMDKNNFVSEGQRSKEKLEKLKQEIIKSPFKSSEYRRPTNLSDVLYEDLEKYIDKKYPSGNCELKGFEKERFLHSVFIKNLTKIYITNENYFMEIDTYLSGSATSSGSGNKSISIGSSINSGLLSSLKNKPVFLIQGESGSGKSSLISNWLKQHKEQHPEDLVVSHWIGASPSSNKFTSILIRIMNEIKNQIEIDQKIANGGSNSSSSSSSSMFSTTSTSSVSWLPEIPDETFESEKIVSEFPQFLQYVMSHPSLNGKRLVLLIDGLDKLDPRENSQELIWFPRNFPHNVKVIVSSIQGSRQSEVLKKRGSHILSILPFTEAERKSMVRLYLQKYAKKLSDQQEIAIAISKSTTNPRFLQLLLDDILVFGDYERLNDRIKTLLRAKNTSELYEIILDRIEKDYDPKAKGLVSEFLKYIWAGRRGVEMSMLSTLLLKKNIDPAEWGSLLVLMEAYITSSSGVISFLNDDISKAVEKKYITTPKIGIEIHTNLAEAFEQSGDLNERKVEEYPYQLLKSENWESLKNTLTNLYVFDKLYTPNHKVDLINYWNVLEKQTKPPKNAAERDDPIPYNCSNEFKAIISRSFIQASGLVISDVWFRVASFLEELSQFDGAEVLYNKCRELYINNSQNIEAAKVDRAMGRMYLTMGQNDKSDSKFRLALSIYTKERGQEDIEVAITLNLLGTLATNRCKFDEAKQILNQAMNICESKYESNVLLIADIAYSLGSVCFVEPNRKLEVAEAYFARSLELTESKVGDMDVAYARILTRLGSLNIEKDTYADAEAFFKAALKIYEARLGIDHSRVSQILRHMISLYEVQENYKMAEQCCIRALAITKKIYGNSHNLVSATQIRQALLYNSMNRKQDCLNLLNEVKVTREKEFGPDHKQVKHIIDLIKEIDKPIVPKAPPPPPPSSSSPSASSLLMKSITSLPIVNGQAVLSVPKPPVSRGPNGIPIPPPPPPTIKLYTNMVSLQSVMKQNVGRIPVAQPTSFNSPVQPPSPRTQQAIQQGQQQRQQVQQQQQQVQQQMSQKVSSLQQQPQQQQQQQPSQGYGNRQNTPLFQQPIFQQQFQQNRIQQPQQQPQQQAYVGDMLAQFDQQKLKRVQNANDRSGASQIVENLIGKKKCSKPVSLVNKGYMEESNQIDMGALFD.

2 disordered regions span residues 84 to 109 (RKTQ…QKGQ) and 326 to 359 (SEYS…NSNQ). Low complexity predominate over residues 89–105 (TSSNGSTSTTTTTTTTT). Acidic residues predominate over residues 333 to 352 (DDGENDQSDDDDDNEDDDDF). TPR repeat units follow at residues 1110-1143 (SDVW…YINN), 1150-1183 (AKVD…YTKE), 1192-1225 (AITL…CESK), 1234-1269 (ADIA…TESK), 1278-1311 (ARIL…YEAR), and 1320-1353 (SQIL…TKKI). Disordered regions lie at residues 1500–1528 (VAQP…QQQR) and 1544–1571 (QKVS…RQNT). Residues 1516-1547 (RTQQAIQQGQQQRQQVQQQQQQVQQQMSQKVS) are a coiled coil. Composition is skewed to low complexity over residues 1518 to 1528 (QQAIQQGQQQR) and 1544 to 1563 (QKVS…QPSQ).

In Dictyostelium discoideum (Social amoeba), this protein is TPR repeat-containing protein DDB_G0287407.